An 81-amino-acid chain; its full sequence is Cytotoxin 1b (81 aa).

Residues 1 to 21 (MKTLLLTLVVVTIVCLDLGYT) form the signal peptide. 4 disulfide bridges follow: Cys24–Cys42, Cys35–Cys59, Cys63–Cys74, and Cys75–Cys80.

It belongs to the three-finger toxin family. Short-chain subfamily. Type IA cytotoxin sub-subfamily. In terms of assembly, monomer in solution; Homodimer and oligomer in the presence of negatively charged lipids forming a pore with a size ranging between 20 and 30 Angstroms. Expressed by the venom gland.

Its subcellular location is the secreted. The protein resides in the target cell membrane. Functionally, shows cytolytic activity on many different cells by forming pore in lipid membranes. In vivo, increases heart rate or kills the animal by cardiac arrest. In addition, it binds to heparin with high affinity, interacts with Kv channel-interacting protein 1 (KCNIP1) in a calcium-independent manner, and binds to integrin alpha-V/beta-3 (ITGAV/ITGB3) with moderate affinity. The protein is Cytotoxin 1b of Naja atra (Chinese cobra).